The chain runs to 1083 residues: Voltage-gated inwardly rectifying potassium channel KCNH3 (1083 aa).

Residues 1–228 lie on the Cytoplasmic side of the membrane; it reads MPAMRGLLAP…HCGALRATWD (228 aa). Positions 18–90 constitute a PAS domain; sequence IATRFDGTHS…QQIRKALDEH (73 aa). A PAC domain is found at 93–145; it reads FKAELILYRKSGLPFWCLLDVIPIKNEKGEVALFLVSHKDISETKNRGGPDRW. Over residues 137 to 150 the composition is skewed to basic and acidic residues; the sequence is KNRGGPDRWKETGG. A disordered region spans residues 137 to 157; the sequence is KNRGGPDRWKETGGGRRRYGR. Residues 229–249 form a helical membrane-spanning segment; that stretch reads GFILLATLYVAVTVPYSVCVS. Residues 250 to 259 are Extracellular-facing; it reads TAREPSAARG. A helical transmembrane segment spans residues 260–280; sequence PPSVCDLAVEVLFILDIVLNF. At 281–302 the chain is on the cytoplasmic side; that stretch reads RTTFVSKSGQVVFAPKSICLHY. A helical membrane pass occupies residues 303–323; the sequence is VTTWFLLDVIAALPFDLLHAF. The Extracellular portion of the chain corresponds to 324–331; that stretch reads KVNVYFGA. The chain crosses the membrane as a helical; Voltage-sensor span at residues 332–352; that stretch reads HLLKTVRLLRLLRLLPRLDRY. Residues 353–361 lie on the Cytoplasmic side of the membrane; it reads SQYSAVVLT. The chain crosses the membrane as a helical span at residues 362-382; that stretch reads LLMAVFALLAHWVACVWFYIG. The Extracellular segment spans residues 383-453; sequence QREIESSESE…GGPSLRSAYI (71 aa). Residues asparagine 421, asparagine 428, and asparagine 436 are each glycosylated (N-linked (GlcNAc...) asparagine). Positions 454-474 form an intramembrane region, pore-forming; sequence TSLYFALSSLTSVGFGNVSAN. A Selectivity filter motif is present at residues 465–470; that stretch reads SVGFGN. Residues 475-479 lie on the Extracellular side of the membrane; sequence TDTEK. Residues 480–500 form a helical membrane-spanning segment; sequence IFSICTMLIGALMHAVVFGNV. Residues 501-1083 lie on the Cytoplasmic side of the membrane; that stretch reads TAIIQRMYAR…QWTQEEGTGV (583 aa). Residue 582-697 participates in a nucleoside 3',5'-cyclic phosphate binding; it reads LFEAASRGCL…FAPRFSRGLR (116 aa). Disordered stretches follow at residues 729–810, 832–873, and 972–1055; these read EEKE…LRLP, CGSD…SEAR, and MAPW…ALPW. A compositionally biased stretch (basic residues) spans 773 to 785; sequence TAPRPRLGGRGRP. Residues 844 to 861 are compositionally biased toward low complexity; it reads GQSGPECSSSPSPGPESG.

It belongs to the potassium channel family. H (Eag) (TC 1.A.1.20) subfamily. Kv12.2/KCNH3 sub-subfamily. The potassium channel is probably composed of a homo- or heterotetrameric complex of pore-forming alpha subunits that can associate with modulating beta subunits. Interacts with KCNE1 and KCNE3; these interactions regulate KCNH3 trafficking to the plasma membrane and its subsequent voltage-gated potassium channel activity. Post-translationally, N-glycosylated. N-glycosylation mediates traffick to the cell membrane but is not necessary for voltage-gated potassium channel activity. As to expression, detected only in brain, in particular in the telencephalon. Detected in the cerebral cortex, occipital pole, frontal and temporal lobe, putamen, amygdala, hippocampus and caudate nucleus.

The protein localises to the cell membrane. The enzyme catalyses K(+)(in) = K(+)(out). Functionally, pore-forming (alpha) subunit of a voltage-gated inwardly rectifying potassium channel. Charactherized by a fast rate of activation during depolarization followed by a rapid inactivation at much more depolarized value causing inward rectification due to a C-type inactivation mechanism. Exhibits a rapid recovery from inactivation. The polypeptide is Voltage-gated inwardly rectifying potassium channel KCNH3 (Homo sapiens (Human)).